The chain runs to 241 residues: DNA repair protein RecO (241 aa).

It belongs to the RecO family.

Functionally, involved in DNA repair and RecF pathway recombination. This chain is DNA repair protein RecO, found in Dinoroseobacter shibae (strain DSM 16493 / NCIMB 14021 / DFL 12).